The sequence spans 178 residues: Inner membrane-spanning protein YciB (178 aa).

5 consecutive transmembrane segments (helical) span residues 22–42 (IFVA…VSWL), 50–70 (MALF…ALHN), 76–96 (WKVT…HWFM), 121–141 (IAWA…AFWL), and 149–169 (FKVF…GIYI).

This sequence belongs to the YciB family.

The protein localises to the cell inner membrane. Plays a role in cell envelope biogenesis, maintenance of cell envelope integrity and membrane homeostasis. In Erwinia tasmaniensis (strain DSM 17950 / CFBP 7177 / CIP 109463 / NCPPB 4357 / Et1/99), this protein is Inner membrane-spanning protein YciB.